Here is a 331-residue protein sequence, read N- to C-terminus: Protein MGF 300-4L (331 aa).

The protein belongs to the asfivirus MGF 300 family.

The protein is Protein MGF 300-4L of African swine fever virus (isolate Tick/Malawi/Lil 20-1/1983) (ASFV).